A 114-amino-acid polypeptide reads, in one-letter code: Iron-sulfur cluster insertion protein ErpA (114 aa).

Residues Cys42, Cys106, and Cys108 each contribute to the iron-sulfur cluster site.

It belongs to the HesB/IscA family. In terms of assembly, homodimer. Requires iron-sulfur cluster as cofactor.

Required for insertion of 4Fe-4S clusters for at least IspG. The sequence is that of Iron-sulfur cluster insertion protein ErpA from Haemophilus influenzae (strain PittGG).